A 495-amino-acid polypeptide reads, in one-letter code: NADH-ubiquinone oxidoreductase chain 4 (495 aa).

Transmembrane regions (helical) follow at residues 9–29, 37–57, 89–109, 118–138, 139–159, 173–193, 214–234, 245–265, 272–292, 307–327, 335–355, 367–387, 413–433, and 457–477; these read YSNL…ILVI, IRGI…FFWI, ISLF…LVGF, EYMI…CSLD, LLIF…IIGV, FFLY…FIFF, ILLW…VPVH, PTAG…YGFL, FPEA…IAII, IIAY…FSLN, ILLM…VGAL, YGGL…FTLA, LVAT…LWLY, and VLIF…PEVF.

This sequence belongs to the complex I subunit 4 family.

The protein localises to the mitochondrion membrane. The catalysed reaction is a ubiquinone + NADH + 5 H(+)(in) = a ubiquinol + NAD(+) + 4 H(+)(out). Functionally, core subunit of the mitochondrial membrane respiratory chain NADH dehydrogenase (Complex I) that is believed to belong to the minimal assembly required for catalysis. Complex I functions in the transfer of electrons from NADH to the respiratory chain. The immediate electron acceptor for the enzyme is believed to be ubiquinone. The protein is NADH-ubiquinone oxidoreductase chain 4 (ND4) of Marchantia polymorpha (Common liverwort).